The following is a 101-amino-acid chain: Small ribosomal subunit protein uS14 (101 aa).

Positions 1-21 (MAKVSLIKKNESRKKKSQSLH) are disordered. Basic residues predominate over residues 11-21 (ESRKKKSQSLH).

This sequence belongs to the universal ribosomal protein uS14 family. Part of the 30S ribosomal subunit. Contacts proteins S3 and S10.

Binds 16S rRNA, required for the assembly of 30S particles and may also be responsible for determining the conformation of the 16S rRNA at the A site. This Rickettsia canadensis (strain McKiel) protein is Small ribosomal subunit protein uS14.